A 1082-amino-acid chain; its full sequence is Error-prone DNA polymerase (1082 aa).

The protein belongs to the DNA polymerase type-C family. DnaE2 subfamily.

It localises to the cytoplasm. It carries out the reaction DNA(n) + a 2'-deoxyribonucleoside 5'-triphosphate = DNA(n+1) + diphosphate. DNA polymerase involved in damage-induced mutagenesis and translesion synthesis (TLS). It is not the major replicative DNA polymerase. This chain is Error-prone DNA polymerase, found in Xanthomonas campestris pv. campestris (strain 8004).